Reading from the N-terminus, the 187-residue chain is Small ribosomal subunit protein uS5 (187 aa).

The interval 1–20 (MAERENRRDRRDDRSREETP) is disordered. The S5 DRBM domain maps to 22–85 (FADRLVAINR…EQAKRQMIRV (64 aa)). Positions 154–174 (DGLKRESSPRQVAQRRGKKVA) are disordered.

It belongs to the universal ribosomal protein uS5 family. Part of the 30S ribosomal subunit. Contacts proteins S4 and S8.

With S4 and S12 plays an important role in translational accuracy. In terms of biological role, located at the back of the 30S subunit body where it stabilizes the conformation of the head with respect to the body. In Cereibacter sphaeroides (strain ATCC 17025 / ATH 2.4.3) (Rhodobacter sphaeroides), this protein is Small ribosomal subunit protein uS5.